The primary structure comprises 324 residues: Probable UDP-sugar transporter protein SLC35A4 (324 aa).

Topologically, residues 1 to 18 are cytoplasmic; the sequence is MSVEDGGVPGLGRPRKAR. The chain crosses the membrane as a helical span at residues 19–39; sequence WTLMLLLSTAMYGAHAPLLAL. Residues 40-52 are Lumenal-facing; that stretch reads CHVDGRVPFRPSS. Residues 53–73 traverse the membrane as a helical segment; the sequence is AVLLTELTKLLLCALSLLVGW. Over 74 to 85 the chain is Cytoplasmic; the sequence is QAWPQGTPPWRQ. Residues 86 to 106 traverse the membrane as a helical segment; the sequence is AAPFALSALLYGANNNLVIYL. Residues 107–141 lie on the Lumenal side of the membrane; it reads QRYMDPSTYQVLSNLKIGSTALFYCLCLRHRLSAR. The chain crosses the membrane as a helical span at residues 142 to 162; sequence QGLALLLLMAAGACYAAGGLQ. At 163-180 the chain is on the cytoplasmic side; the sequence is DPGTTLPGPPSAAATSPM. Residues 181–201 form a helical membrane-spanning segment; sequence PLHITPLGLLLLILYCLISGL. Over 202–214 the chain is Lumenal; it reads SSVYTELLMKRQR. The chain crosses the membrane as a helical span at residues 215–235; sequence LPLALQNLFLYSFGVLLNLGL. Residues 236–248 are Cytoplasmic-facing; that stretch reads HAGGGPGPGLLEG. Residues 249 to 271 form a helical membrane-spanning segment; the sequence is FSGWMALVVLSQALNGLLMSAVM. Residues 272–275 are Lumenal-facing; the sequence is KHGS. Residues 276–298 traverse the membrane as a helical segment; sequence SITRLFVVSCSLVVNAVLSAALL. Topologically, residues 299–324 are cytoplasmic; sequence RLQLTAAFFLATLLIGLAVRLYYGSR.

Belongs to the nucleotide-sugar transporter family. SLC35A subfamily. As to quaternary structure, found in a complex with SLC35A2 and SLC35A3.

The protein localises to the golgi apparatus membrane. It catalyses the reaction CDP-L-ribitol(in) + CDP(out) = CDP-L-ribitol(out) + CDP(in). Mediates the transport of CDP-ribitol. Does not exhibit CMP-sialic acid, UDP-galactose and UDP-N-acetylglucosamine transport activity. The protein is Probable UDP-sugar transporter protein SLC35A4 of Bos taurus (Bovine).